The chain runs to 564 residues: MRLSEFHLHTTKEIPADAELVSHRLMLRAGMIRKLASGLYTWSPLGLRVLRKVEAIVRDEMNRAGAVEMLLPTIQPRELWEESERWEKFGSQLLKIKDRKQAEYCYSPTAEEAVTDYVRQELTSYKQLPVNLYQIQTKFRDEIRPRFGVMRAREFVMKDAYSFHLSDADLVREYENMRATYTRIFTRLGLEFRSVQADSGAIGGDASQEFHVIADSGEDVLAFSTGSDYAANIEAAIAATPGPRLTAKETLQKVSTPTQKRCEDVTALLDIPLQRMVKSIAVMTDSGFFLALLRGDHTLNDIKLSRLPGLANFRLANEVEIARHLGSEPGFLGPVCPGMSIRIIADCEVAVMADFVVGANEVGFHLVGVNWGRDLPEPEVVADIRNVIEGDRAVDGGKICIARGIEVGHVFQLGRKYAEAMKATVLDEYGKAVTMTMGCYGIGVSRIVAAAIEQNHDVAGIIWPAPIAPWQVAVCVINPKKDPVIIAAAELLLAELQSADVDTVLDDRGLRPGVMFADMELIGIPHRIVVSERGLAAGTYEYRARRTAMVENLDKTTLLTRIKA.

Belongs to the class-II aminoacyl-tRNA synthetase family. ProS type 1 subfamily. As to quaternary structure, homodimer.

It localises to the cytoplasm. It carries out the reaction tRNA(Pro) + L-proline + ATP = L-prolyl-tRNA(Pro) + AMP + diphosphate. In terms of biological role, catalyzes the attachment of proline to tRNA(Pro) in a two-step reaction: proline is first activated by ATP to form Pro-AMP and then transferred to the acceptor end of tRNA(Pro). As ProRS can inadvertently accommodate and process non-cognate amino acids such as alanine and cysteine, to avoid such errors it has two additional distinct editing activities against alanine. One activity is designated as 'pretransfer' editing and involves the tRNA(Pro)-independent hydrolysis of activated Ala-AMP. The other activity is designated 'posttransfer' editing and involves deacylation of mischarged Ala-tRNA(Pro). The misacylated Cys-tRNA(Pro) is not edited by ProRS. The sequence is that of Proline--tRNA ligase from Xylella fastidiosa (strain M12).